A 1315-amino-acid chain; its full sequence is Myopalladin (1315 aa).

Disordered stretches follow at residues 19-60 (SYLA…DLPD), 81-145 (INHD…TQSK), 166-204 (HSSKRIRPRACKNHKSKTESQNKVLQENSPTFSDLTERR), and 230-266 (EAKRREAELAAGEAAAGDSTPGSSPSSLYYEEPLGQP). Composition is skewed to basic and acidic residues over residues 23–35 (ETRHRGDNERSRA) and 84–104 (DPLERVDEAQARKRLSSDQTK). Phosphoserine occurs at positions 99 and 129. The segment covering 166 to 180 (HSSKRIRPRACKNHK) has biased composition (basic residues). The segment covering 184–199 (ESQNKVLQENSPTFSD) has biased composition (polar residues). Positions 219–240 (DNELNHAIEQREAKRREAELAA) form a coiled coil. The residue at position 249 (threonine 249) is a Phosphothreonine. The 91-residue stretch at 267–357 (PRFTQKLRSR…DSTSAEIYIE (91 aa)) folds into the Ig-like 1 domain. A disulfide bond links cysteine 288 and cysteine 339. Residues 359–392 (VSSSDSEGDPNKEEMNRIQKPNEVSSPPTTSAAI) form a disordered region. Positions 432 to 528 (PVFTKMLQNL…GTVSSIAQLD (97 aa)) constitute an Ig-like 2 domain. Cysteines 453 and 512 form a disulfide. 3 disordered regions span residues 535–652 (ISDN…VLAK), 674–704 (LQNTSPSSPKESLHMSALNSAPPAVTISSKQ), and 725–747 (SSTSTATVSPSSSPVFTLSNTPQ). The span at 609-623 (SSGSGAANTSQTRPN) shows a compositional bias: polar residues. Serine 641 carries the phosphoserine modification. Residues 725–741 (SSTSTATVSPSSSPVFT) are compositionally biased toward low complexity. Serine 754 bears the Phosphoserine mark. Disordered regions lie at residues 762-814 (HPST…TPVS) and 840-865 (NAMGLPKSAPSVPSQGLMKKTTKAPQ). Residues 779 to 790 (PAPPSPAEPAAP) are compositionally biased toward pro residues. Serine 809 and serine 814 each carry phosphoserine. 2 positions are modified to phosphoserine: serine 903 and serine 924. 3 consecutive Ig-like domains span residues 941 to 1025 (PIFD…GRIS), 1068 to 1157 (PHFL…LELT), and 1167 to 1257 (PVIL…ARLD). Cysteine 1089 and cysteine 1141 form a disulfide bridge.

This sequence belongs to the myotilin/palladin family. In terms of assembly, interacts with TTN/titin, NEB, NEBL, ACTN2 and CARP.

The protein localises to the cytoplasm. Its subcellular location is the nucleus. It is found in the myofibril. It localises to the sarcomere. The protein resides in the z line. Component of the sarcomere that tethers together nebulin (skeletal muscle) and nebulette (cardiac muscle) to alpha-actinin, at the Z lines. This is Myopalladin (Mypn) from Mus musculus (Mouse).